A 316-amino-acid polypeptide reads, in one-letter code: Coiled-coil domain-containing protein 130 homolog (316 aa).

Positions A182 to L203 form a coiled coil. The interval K287–G316 is disordered.

This sequence belongs to the CWC16 family.

The protein is Coiled-coil domain-containing protein 130 homolog of Drosophila melanogaster (Fruit fly).